The primary structure comprises 201 residues: Molybdenum cofactor guanylyltransferase (201 aa).

GTP contacts are provided by residues 14–16 (LAG), Lys-31, and Asp-104. Asp-104 is a Mg(2+) binding site.

This sequence belongs to the MobA family. Monomer. Requires Mg(2+) as cofactor.

Its subcellular location is the cytoplasm. The catalysed reaction is Mo-molybdopterin + GTP + H(+) = Mo-molybdopterin guanine dinucleotide + diphosphate. Transfers a GMP moiety from GTP to Mo-molybdopterin (Mo-MPT) cofactor (Moco or molybdenum cofactor) to form Mo-molybdopterin guanine dinucleotide (Mo-MGD) cofactor. This chain is Molybdenum cofactor guanylyltransferase, found in Helicobacter pylori (strain G27).